The following is a 113-amino-acid chain: Large ribosomal subunit protein uL22 (113 aa).

Belongs to the universal ribosomal protein uL22 family. As to quaternary structure, part of the 50S ribosomal subunit.

Functionally, this protein binds specifically to 23S rRNA; its binding is stimulated by other ribosomal proteins, e.g. L4, L17, and L20. It is important during the early stages of 50S assembly. It makes multiple contacts with different domains of the 23S rRNA in the assembled 50S subunit and ribosome. In terms of biological role, the globular domain of the protein is located near the polypeptide exit tunnel on the outside of the subunit, while an extended beta-hairpin is found that lines the wall of the exit tunnel in the center of the 70S ribosome. This Solibacter usitatus (strain Ellin6076) protein is Large ribosomal subunit protein uL22.